The chain runs to 143 residues: Large-conductance mechanosensitive channel (143 aa).

2 consecutive transmembrane segments (helical) span residues 10 to 30 (FAVK…GAFS) and 89 to 109 (GSFI…FLMV).

It belongs to the MscL family. As to quaternary structure, homopentamer.

The protein resides in the cell inner membrane. Channel that opens in response to stretch forces in the membrane lipid bilayer. May participate in the regulation of osmotic pressure changes within the cell. This is Large-conductance mechanosensitive channel from Burkholderia pseudomallei (strain 668).